Consider the following 662-residue polypeptide: Methyl-accepting chemotaxis protein TlpA (662 aa).

At Met-1–Arg-16 the chain is on the cytoplasmic side. Residues Leu-17–Tyr-37 traverse the membrane as a helical segment. The Extracellular segment spans residues Gln-38–Ile-281. Residues Val-152–Trp-228 enclose the Cache domain. A helical transmembrane segment spans residues Met-282–Ile-302. The HAMP domain maps to Arg-303–His-355. The Cytoplasmic segment spans residues Arg-303–Lys-662. Glutamate methyl ester (Glu) occurs at positions 370, 594, 629, and 636. In terms of domain architecture, Methyl-accepting transducer spans Ser-374 to Thr-610.

Belongs to the methyl-accepting chemotaxis (MCP) protein family. As to quaternary structure, interacts with YabA.

Its subcellular location is the cell membrane. Functionally, chemotactic-signal transducers respond to changes in the concentration of attractants and repellents in the environment, transduce a signal from the outside to the inside of the cell, and facilitate sensory adaptation through the variation of the level of methylation. All amino acids serve as attractants in B.subtilis, they appear to cause an increase in the turnover methyl groups, leading to methylation of an unidentified acceptor, while repellents have been shown to cause a decrease in methyl group turnover. The methyl groups are added by a methyltransferase and removed by a methylesterase. This is Methyl-accepting chemotaxis protein TlpA from Bacillus subtilis (strain 168).